The primary structure comprises 1185 residues: 205 kDa microtubule-associated protein (1185 aa).

The segment covering 146–159 has biased composition (low complexity); it reads EPNQLPEQLQQQQQ. The disordered stretch occupies residues 146–196; it reads EPNQLPEQLQQQQQIESQGVHEDPRQEDEDEHSSVATTYGTSSLSENNSSP. Residues 179-196 show a composition bias toward polar residues; the sequence is SVATTYGTSSLSENNSSP. Residues Ser-354 and Ser-448 each carry the phosphoserine modification. At Tyr-450 the chain carries Phosphotyrosine. Ser-709, Ser-710, and Ser-712 each carry phosphoserine. Phosphothreonine is present on Thr-721. Ser-728 is modified (phosphoserine). Positions 745-977 are microtubule-binding; it reads TAADGQSISQ…ASTKVRPAAT (233 aa). Over residues 856 to 866 the composition is skewed to low complexity; that stretch reads SIATKTSTTSS. 2 disordered regions span residues 856 to 1035 and 1054 to 1114; these read SIAT…TSTA and SASL…SSPA. 2 stretches are compositionally biased toward polar residues: residues 867–881 and 908–936; these read LTGNPRKSLSSNVGS and TITNKPTASGTASDNVTRTTLRPLVSTNA. Ser-874 is subject to Phosphoserine. Over residues 940–952 the composition is skewed to low complexity; that stretch reads ATSGTGSVASSTA. Residues 989 to 999 are compositionally biased toward polar residues; it reads PRSTISSTTTV. The span at 1003–1015 shows a compositional bias: low complexity; that stretch reads PSTSTPSFSTRSP. Composition is skewed to polar residues over residues 1016-1026 and 1054-1066; these read NKQQSNGLGKN and SASLTYNNGSTSR. Residues Ser-1075 and Ser-1086 each carry the phosphoserine modification. A compositionally biased stretch (polar residues) spans 1100-1111; it reads LTPQSKDGTAKS. Ser-1121 bears the Phosphoserine mark.

The protein localises to the cytoplasm. The protein resides in the cytoskeleton. It localises to the spindle. Functionally, may play an important role in the regulation of microtubule assembly and interaction. The polypeptide is 205 kDa microtubule-associated protein (Map205) (Drosophila melanogaster (Fruit fly)).